The chain runs to 357 residues: MSELVAGPHTRAPLSLPTLMRQVLLAAAPATAFGVWLYGWPALNLLLITLVTVLVAEAACLRAAGRPVRSGLGDSSALVAGWILAMSLPPWAPWWIGVIGGLLAVVLGKGVFGGTGQNLFNPAMVARVALLIAFPVEMTRWVEPAPLGSAVAPGFLESLGITFTGTADWDAVTGATTLDATRTAVTEGQSIETALPEAYQPALALLGYAPGSLAEGSALLLALGGVYLIYRRVIAWEIPAVMLATLAVLATVFHTLDPTRYADAGVHILAGSTLLAAFFIATDPTTSPTTTVGRAVFAAGCAVIVWVVRTYGGYPEATAFAVLLMNAFTPLIDHWIRPRVYGRTRLGAPLSTDREGP.

The next 3 helical transmembrane spans lie at 35–55 (VWLY…TVLV), 88–108 (LPPW…VVLG), and 119–139 (LFNP…VEMT). An FMN phosphoryl threonine modification is found at Thr-176. 5 helical membrane passes run 209 to 229 (APGS…VYLI), 233 to 253 (VIAW…ATVF), 261 to 281 (YADA…FFIA), 295 to 315 (AVFA…GGYP), and 316 to 336 (EATA…DHWI).

It belongs to the NqrB/RnfD family. As to quaternary structure, the complex is composed of six subunits: RnfA, RnfB, RnfC, RnfD, RnfE and RnfG. FMN is required as a cofactor.

It is found in the cell inner membrane. Part of a membrane-bound complex that couples electron transfer with translocation of ions across the membrane. The protein is Ion-translocating oxidoreductase complex subunit D of Halorhodospira halophila (strain DSM 244 / SL1) (Ectothiorhodospira halophila (strain DSM 244 / SL1)).